The chain runs to 340 residues: MLHTIGILIWIIIKIIVIVVPLLISVAYLTYAERKVIGYIQVRIGPNRVGLKGLLQPFADLLKLITKEIIVPTRSNKYLFVIAPLFALVPSLVGWAVIPFQEGVVLANINAGVLYLFAMSSLGVYGVLIAGWASNSKYAMFGALRSTAQTVSYEIAMGFALVGVLLAAGSMNLTDIVNSQKGGMLHWWFIPLLPLFLVFWISGIAETNRAPFDLAEGESEIVAGFHVEYSGIGFALFFLSEYASMILISTVLAILFMGGWLSPFEGITFLDQIFFIVPGFVWLLLKISFFLFVYLWVRATFPRYRYDQLMRLGWKVLIPVTIVWLIVTAVMVVAHVKPWF.

8 helical membrane passes run 4–24 (TIGI…PLLI), 78–98 (YLFV…WAVI), 113–133 (VLYL…AGWA), 151–171 (VSYE…AGSM), 184–204 (MLHW…ISGI), 244–264 (SMIL…LSPF), 273–293 (IFFI…FLFV), and 316–336 (VLIP…VAHV).

The protein belongs to the complex I subunit 1 family. NDH-1 is composed of 14 different subunits. Subunits NuoA, H, J, K, L, M, N constitute the membrane sector of the complex.

Its subcellular location is the cell inner membrane. The catalysed reaction is a quinone + NADH + 5 H(+)(in) = a quinol + NAD(+) + 4 H(+)(out). Its function is as follows. NDH-1 shuttles electrons from NADH, via FMN and iron-sulfur (Fe-S) centers, to quinones in the respiratory chain. The immediate electron acceptor for the enzyme in this species is believed to be ubiquinone. Couples the redox reaction to proton translocation (for every two electrons transferred, four hydrogen ions are translocated across the cytoplasmic membrane), and thus conserves the redox energy in a proton gradient. This subunit may bind ubiquinone. The sequence is that of NADH-quinone oxidoreductase subunit H from Legionella pneumophila (strain Lens).